Reading from the N-terminus, the 168-residue chain is Large ribosomal subunit protein bL17 (168 aa).

The tract at residues 124 to 168 (QATGEAEAATKRAAKDAEGSAEVSEAKVDTTKADDEAAAEESKDA) is disordered. A compositionally biased stretch (basic and acidic residues) spans 131-168 (AATKRAAKDAEGSAEVSEAKVDTTKADDEAAAEESKDA).

It belongs to the bacterial ribosomal protein bL17 family. Part of the 50S ribosomal subunit. Contacts protein L32.

In Streptomyces coelicolor (strain ATCC BAA-471 / A3(2) / M145), this protein is Large ribosomal subunit protein bL17.